The following is a 459-amino-acid chain: C-type lectin domain family 14 member A (459 aa).

An N-terminal signal peptide occupies residues 1-21; sequence MRPALALCLLCPAFWPRPGNG. The Extracellular segment spans residues 22–386; that stretch reads EHPTADRAAC…VSLTFDTSST (365 aa). In terms of domain architecture, C-type lectin spans 33-173; that stretch reads ASGACYSLHH…LRTDGYLCKY (141 aa). C143 and C162 are oxidised to a cystine. N189 is a glycosylation site (N-linked (GlcNAc...) asparagine). Residues 246–288 enclose the EGF-like domain; that stretch reads PCSGRYLLAGKCVELPDCLDHLGDFTCECAVGFELGKDGRSCE. Residues N306, N317, and N370 are each glycosylated (N-linked (GlcNAc...) asparagine). The helical transmembrane segment at 387–407 threads the bilayer; the sequence is VVFILVSIAVIVLVVLTITVL. The Cytoplasmic portion of the chain corresponds to 408-459; sequence GLFKLCFHKSRSSRTGKGALDSPGVECDAEATSLHHSSTQCTDIGVKSGTVA. The residue at position 440 (S440) is a Phosphoserine.

The protein localises to the membrane. The sequence is that of C-type lectin domain family 14 member A (Clec14a) from Mus musculus (Mouse).